A 486-amino-acid polypeptide reads, in one-letter code: Cytochrome P450 monooxygenase aclC (486 aa).

Cys-427 serves as a coordination point for heme.

Belongs to the cytochrome P450 family. Heme is required as a cofactor.

It participates in mycotoxin biosynthesis. Its function is as follows. Cytochrome P450 monooxygenase; part of the gene cluster that mediates the biosynthesis of aspirochlorine (or antibiotic A30641), an unusual halogenated spiro compound with distinctive antifungal properties due to selective inhibition of protein biosynthesis, and which is also active against bacteria, viruses, and murine tumor cells. The non-ribosomal peptide synthetase (NRPS) aclP is responsible the formation of the diketopiperazine (DKP) core from the condensation of 2 phenylalanine residues. One Phe residue is tailored into chlorotyrosine by hydroxylation and chlorination, whereas the second Phe undergoes an unprecedented C-C bond cleavage to be converted into glycine. After formation of the DKP, sulfur is incorporated into the DKP by conjugation with glutathione by aclG, followed by its stepwise degradation to the thiol by aclI, aclJ and aclK, and the dithiol oxidation by aclT. In addition, oxygenases (aclB, aclC, aclL and aclO) and O-methyltransferases (aclM and aclU) act as tailoring enzymes to produce the intermediate dechloroaspirochlorine. Ultimately, chlorination of dechloroaspirochlorine by the halogenase aclH is the last step in the aspirochlorine pathway. This chain is Cytochrome P450 monooxygenase aclC, found in Aspergillus oryzae (strain ATCC 42149 / RIB 40) (Yellow koji mold).